Consider the following 235-residue polypeptide: Ribitol-5-phosphate cytidylyltransferase (235 aa).

CTP-binding positions include 7–10 (LAGG), 82–88 (GADRNTS), and Ser-113.

This sequence belongs to the IspD/TarI cytidylyltransferase family. TarI subfamily.

The enzyme catalyses D-ribitol 5-phosphate + CTP + H(+) = CDP-L-ribitol + diphosphate. The protein operates within cell wall biogenesis; poly(ribitol phosphate) teichoic acid biosynthesis. Its function is as follows. Catalyzes the transfer of the cytidylyl group of CTP to D-ribitol 5-phosphate. The protein is Ribitol-5-phosphate cytidylyltransferase of Streptococcus pneumoniae (strain ATCC 700669 / Spain 23F-1).